Here is a 164-residue protein sequence, read N- to C-terminus: Phosphopantetheine adenylyltransferase (164 aa).

Ser-9 is a substrate binding site. ATP is bound by residues 9-10 and His-17; that span reads SF. Residues Lys-41, Thr-74, and Arg-88 each contribute to the substrate site. ATP contacts are provided by residues 89–91, Glu-99, and 124–130; these read GVR and NSFVASS.

Belongs to the bacterial CoaD family. In terms of assembly, homohexamer. Mg(2+) serves as cofactor.

The protein localises to the cytoplasm. The enzyme catalyses (R)-4'-phosphopantetheine + ATP + H(+) = 3'-dephospho-CoA + diphosphate. It participates in cofactor biosynthesis; coenzyme A biosynthesis; CoA from (R)-pantothenate: step 4/5. In terms of biological role, reversibly transfers an adenylyl group from ATP to 4'-phosphopantetheine, yielding dephospho-CoA (dPCoA) and pyrophosphate. This Lactobacillus helveticus (strain DPC 4571) protein is Phosphopantetheine adenylyltransferase.